Consider the following 124-residue polypeptide: Small ribosomal subunit protein uS12 (124 aa).

Position 89 is a 3-methylthioaspartic acid (D89).

The protein belongs to the universal ribosomal protein uS12 family. In terms of assembly, part of the 30S ribosomal subunit. Contacts proteins S8 and S17. May interact with IF1 in the 30S initiation complex.

In terms of biological role, with S4 and S5 plays an important role in translational accuracy. Its function is as follows. Interacts with and stabilizes bases of the 16S rRNA that are involved in tRNA selection in the A site and with the mRNA backbone. Located at the interface of the 30S and 50S subunits, it traverses the body of the 30S subunit contacting proteins on the other side and probably holding the rRNA structure together. The combined cluster of proteins S8, S12 and S17 appears to hold together the shoulder and platform of the 30S subunit. The sequence is that of Small ribosomal subunit protein uS12 from Shewanella denitrificans (strain OS217 / ATCC BAA-1090 / DSM 15013).